Consider the following 199-residue polypeptide: Chaperone protein TorD (199 aa).

This sequence belongs to the TorD/DmsD family. TorD subfamily.

Its subcellular location is the cytoplasm. Involved in the biogenesis of TorA. Acts on TorA before the insertion of the molybdenum cofactor and, as a result, probably favors a conformation of the apoenzyme that is competent for acquiring the cofactor. The protein is Chaperone protein TorD of Escherichia coli (strain ATCC 8739 / DSM 1576 / NBRC 3972 / NCIMB 8545 / WDCM 00012 / Crooks).